Here is a 103-residue protein sequence, read N- to C-terminus: Cystatin-A1 (103 aa).

Residues 51–55 (QVVAG) carry the Secondary area of contact motif.

It belongs to the cystatin family.

It localises to the cytoplasm. Functionally, this is an intracellular thiol proteinase inhibitor. The chain is Cystatin-A1 from Sus scrofa (Pig).